Reading from the N-terminus, the 238-residue chain is Demethylmenaquinone methyltransferase (238 aa).

Residues threonine 60, aspartate 81, and 108–109 each bind S-adenosyl-L-methionine; that span reads NA.

Belongs to the class I-like SAM-binding methyltransferase superfamily. MenG/UbiE family.

The enzyme catalyses a 2-demethylmenaquinol + S-adenosyl-L-methionine = a menaquinol + S-adenosyl-L-homocysteine + H(+). Its pathway is quinol/quinone metabolism; menaquinone biosynthesis; menaquinol from 1,4-dihydroxy-2-naphthoate: step 2/2. Its function is as follows. Methyltransferase required for the conversion of demethylmenaquinol (DMKH2) to menaquinol (MKH2). The chain is Demethylmenaquinone methyltransferase from Oceanobacillus iheyensis (strain DSM 14371 / CIP 107618 / JCM 11309 / KCTC 3954 / HTE831).